Reading from the N-terminus, the 492-residue chain is Glutamyl-tRNA(Gln) amidotransferase subunit A (492 aa).

Residues K79 and S154 each act as charge relay system in the active site. S178 functions as the Acyl-ester intermediate in the catalytic mechanism.

It belongs to the amidase family. GatA subfamily. As to quaternary structure, heterotrimer of A, B and C subunits.

The enzyme catalyses L-glutamyl-tRNA(Gln) + L-glutamine + ATP + H2O = L-glutaminyl-tRNA(Gln) + L-glutamate + ADP + phosphate + H(+). In terms of biological role, allows the formation of correctly charged Gln-tRNA(Gln) through the transamidation of misacylated Glu-tRNA(Gln) in organisms which lack glutaminyl-tRNA synthetase. The reaction takes place in the presence of glutamine and ATP through an activated gamma-phospho-Glu-tRNA(Gln). The sequence is that of Glutamyl-tRNA(Gln) amidotransferase subunit A from Desulforudis audaxviator (strain MP104C).